The following is a 138-amino-acid chain: Large ribosomal subunit protein uL14 (138 aa).

The protein belongs to the universal ribosomal protein uL14 family. Part of the 50S ribosomal subunit. Forms a cluster with proteins L3 and L24e, part of which may contact the 16S rRNA in 2 intersubunit bridges.

Functionally, binds to 23S rRNA. Forms part of two intersubunit bridges in the 70S ribosome. The sequence is that of Large ribosomal subunit protein uL14 from Sulfurisphaera tokodaii (strain DSM 16993 / JCM 10545 / NBRC 100140 / 7) (Sulfolobus tokodaii).